The chain runs to 145 residues: U1 small nuclear ribonucleoprotein C (145 aa).

The Matrin-type zinc finger occupies 4 to 36 (YYCDYCDTYLTHDSPSVRKTHCTGRKHRDNVKF). The interval 67 to 91 (FAGGPGGAPPKPAGVSIPPPNMGAP) is disordered. The span at 73–91 (GAPPKPAGVSIPPPNMGAP) shows a compositional bias: pro residues.

It belongs to the U1 small nuclear ribonucleoprotein C family. U1 snRNP is composed of the 7 core Sm proteins B/B', D1, D2, D3, E, F and G that assemble in a heptameric protein ring on the Sm site of the small nuclear RNA to form the core snRNP, and at least 3 U1 snRNP-specific proteins U1-70K, U1-A and U1-C. U1-C interacts with U1 snRNA and the 5' splice-site region of the pre-mRNA.

The protein localises to the nucleus. Functionally, component of the spliceosomal U1 snRNP, which is essential for recognition of the pre-mRNA 5' splice-site and the subsequent assembly of the spliceosome. U1-C is directly involved in initial 5' splice-site recognition for both constitutive and regulated alternative splicing. The interaction with the 5' splice-site seems to precede base-pairing between the pre-mRNA and the U1 snRNA. Stimulates commitment or early (E) complex formation by stabilizing the base pairing of the 5' end of the U1 snRNA and the 5' splice-site region. Regulates alternative splicing of a distinct group of target genes. The protein is U1 small nuclear ribonucleoprotein C of Drosophila melanogaster (Fruit fly).